Consider the following 121-residue polypeptide: Spermidine export protein MdtJ (121 aa).

A run of 4 helical transmembrane segments spans residues 1–21 (MYIYWILLGLAIATEITGTLS), 32–52 (GGFILMLVMISLSYIFLSFAV), 55–75 (IALGVAYALWEGIGILFITLF), and 82–102 (ESLSLMKIAGLTTLVAGIVLI).

It belongs to the drug/metabolite transporter (DMT) superfamily. Small multidrug resistance (SMR) (TC 2.A.7.1) family. MdtJ subfamily. In terms of assembly, forms a complex with MdtI.

The protein localises to the cell inner membrane. Catalyzes the excretion of spermidine. The sequence is that of Spermidine export protein MdtJ from Escherichia coli O139:H28 (strain E24377A / ETEC).